Consider the following 277-residue polypeptide: 4-hydroxy-3-methylbut-2-enyl diphosphate reductase (277 aa).

C12 serves as a coordination point for [4Fe-4S] cluster. The (2E)-4-hydroxy-3-methylbut-2-enyl diphosphate site is built by H36 and H70. 2 residues coordinate dimethylallyl diphosphate: H36 and H70. Isopentenyl diphosphate-binding residues include H36 and H70. C92 is a binding site for [4Fe-4S] cluster. Residue H120 participates in (2E)-4-hydroxy-3-methylbut-2-enyl diphosphate binding. H120 is a dimethylallyl diphosphate binding site. H120 provides a ligand contact to isopentenyl diphosphate. Residue E122 is the Proton donor of the active site. T158 contacts (2E)-4-hydroxy-3-methylbut-2-enyl diphosphate. A [4Fe-4S] cluster-binding site is contributed by C186. S214, N216, and S258 together coordinate (2E)-4-hydroxy-3-methylbut-2-enyl diphosphate. Residues S214, N216, and S258 each coordinate dimethylallyl diphosphate. Residues S214, N216, and S258 each coordinate isopentenyl diphosphate.

Belongs to the IspH family. The cofactor is [4Fe-4S] cluster.

The enzyme catalyses isopentenyl diphosphate + 2 oxidized [2Fe-2S]-[ferredoxin] + H2O = (2E)-4-hydroxy-3-methylbut-2-enyl diphosphate + 2 reduced [2Fe-2S]-[ferredoxin] + 2 H(+). It carries out the reaction dimethylallyl diphosphate + 2 oxidized [2Fe-2S]-[ferredoxin] + H2O = (2E)-4-hydroxy-3-methylbut-2-enyl diphosphate + 2 reduced [2Fe-2S]-[ferredoxin] + 2 H(+). It functions in the pathway isoprenoid biosynthesis; dimethylallyl diphosphate biosynthesis; dimethylallyl diphosphate from (2E)-4-hydroxy-3-methylbutenyl diphosphate: step 1/1. Its pathway is isoprenoid biosynthesis; isopentenyl diphosphate biosynthesis via DXP pathway; isopentenyl diphosphate from 1-deoxy-D-xylulose 5-phosphate: step 6/6. In terms of biological role, catalyzes the conversion of 1-hydroxy-2-methyl-2-(E)-butenyl 4-diphosphate (HMBPP) into a mixture of isopentenyl diphosphate (IPP) and dimethylallyl diphosphate (DMAPP). Acts in the terminal step of the DOXP/MEP pathway for isoprenoid precursor biosynthesis. The chain is 4-hydroxy-3-methylbut-2-enyl diphosphate reductase from Campylobacter jejuni subsp. jejuni serotype O:23/36 (strain 81-176).